A 398-amino-acid polypeptide reads, in one-letter code: S-adenosylmethionine synthase (398 aa).

136-141 contributes to the ATP binding site; sequence GTGSSD.

The protein belongs to the AdoMet synthase 2 family. It depends on Mg(2+) as a cofactor.

It carries out the reaction L-methionine + ATP + H2O = S-adenosyl-L-methionine + phosphate + diphosphate. Its pathway is amino-acid biosynthesis; S-adenosyl-L-methionine biosynthesis; S-adenosyl-L-methionine from L-methionine: step 1/1. Functionally, catalyzes the formation of S-adenosylmethionine from methionine and ATP. The polypeptide is S-adenosylmethionine synthase (Methanosarcina mazei (strain ATCC BAA-159 / DSM 3647 / Goe1 / Go1 / JCM 11833 / OCM 88) (Methanosarcina frisia)).